We begin with the raw amino-acid sequence, 389 residues long: Spore coat polysaccharide biosynthesis protein SpsC (389 aa).

K187 carries the post-translational modification N6-(pyridoxal phosphate)lysine.

The protein belongs to the DegT/DnrJ/EryC1 family. Pyridoxal 5'-phosphate is required as a cofactor.

It participates in spore coat biogenesis; spore coat polysaccharide biosynthesis. This is Spore coat polysaccharide biosynthesis protein SpsC (spsC) from Bacillus subtilis (strain 168).